Reading from the N-terminus, the 579-residue chain is MQNSSVLSFLRERAGLQPDDEAFSFTDYEQDWAGVRKTLTWAQLYQRTLNVAHELRRHGSIRDRAVILAPQGLDYIIAFLGAMQAGFIAVPLSVPQAGSHDERVGAVLADTSPSVVLTTSAVADAIAKYVDHSDTDTVPAILEVDSPNLDVENKSNIRLTDAPSTAYLQYTSGSTRLPAGVMVTHRNLMVNFQQLMADYFAPTNGVAPLDLTIVSWLPFYHDMGLVLGVVAPILGGWRSELTSPISFLQRPARWIQAMATSSHPFSAGPNFAFELAARRTSDADIAGLDLGACQGIISGSERIHPATLNRFSDRFARINFRDDMMLPSYGLAEGTVYAASRPKGSSPEVVYFEPAKLSEGTVKRCEARTGAPLLSYGTPKSPIVRIVDSDTCIECPTGRVGEIWLHGDNVAEGYWHKPEETQRTFGGKLANPSPGTPEGPWLRTGDLGFISEDELFIVGRMKDLLIVYGRNHYPEDIESTVQEITGGRVAAISVPVDETEKLVTIIEVKKRGDSDAEAMQKLVAVKNNITAAISKSHGLNVADLVLVPPGSIPTTTSGKVRRTACVEQYRRQQFSRLDG.

Belongs to the ATP-dependent AMP-binding enzyme family.

This chain is Putative fatty-acid--CoA ligase fadD21 (fadD21), found in Mycobacterium leprae (strain TN).